The primary structure comprises 80 residues: Exodeoxyribonuclease 7 small subunit (80 aa).

Belongs to the XseB family. As to quaternary structure, heterooligomer composed of large and small subunits.

It localises to the cytoplasm. It catalyses the reaction Exonucleolytic cleavage in either 5'- to 3'- or 3'- to 5'-direction to yield nucleoside 5'-phosphates.. Functionally, bidirectionally degrades single-stranded DNA into large acid-insoluble oligonucleotides, which are then degraded further into small acid-soluble oligonucleotides. The polypeptide is Exodeoxyribonuclease 7 small subunit (Caulobacter sp. (strain K31)).